The following is a 218-amino-acid chain: Synaptonemal complex central element protein 2 (218 aa).

The span at 1–32 shows a compositional bias: basic and acidic residues; the sequence is MERQGVDVPHVKCKDQEPQPLGESKEHPRWEE. The disordered stretch occupies residues 1 to 42; sequence MERQGVDVPHVKCKDQEPQPLGESKEHPRWEENCEEEAGGGP. Residues 61 to 87 are a coiled coil; it reads SSLDSSIDILQKRAQELIENINKSRQK. A disordered region spans residues 171–218; the sequence is RWGPDHSRGKSPPRPGNSQPPDVFVSSVAETTSQATASEVQTNRDGEC. A compositionally biased stretch (polar residues) spans 198–211; it reads VAETTSQATASEVQ.

The protein belongs to the SYCE family. As to quaternary structure, homodimer. Found in a complex with SYCP1 and SYCE1. Interacts with SYCP1, SYCE1 and SYCE3. Interacts with TEX12.

It is found in the nucleus. It localises to the chromosome. Its function is as follows. Major component of the transverse central element of synaptonemal complexes (SCS), formed between homologous chromosomes during meiotic prophase. Requires SYCP1 in order to be incorporated into the central element. May have a role in the synaptonemal complex assembly, stabilization and recombination. This chain is Synaptonemal complex central element protein 2 (SYCE2), found in Homo sapiens (Human).